We begin with the raw amino-acid sequence, 117 residues long: Large ribosomal subunit protein uL18 (117 aa).

The protein belongs to the universal ribosomal protein uL18 family. In terms of assembly, part of the 50S ribosomal subunit; part of the 5S rRNA/L5/L18/L25 subcomplex. Contacts the 5S and 23S rRNAs.

Functionally, this is one of the proteins that bind and probably mediate the attachment of the 5S RNA into the large ribosomal subunit, where it forms part of the central protuberance. In Coxiella burnetii (strain CbuK_Q154) (Coxiella burnetii (strain Q154)), this protein is Large ribosomal subunit protein uL18.